Here is a 1066-residue protein sequence, read N- to C-terminus: Probable sucrose-phosphate synthase 4 (1066 aa).

2 disordered regions span residues 132–166 (YAAA…GRMP) and 688–714 (PRHP…SLRD). Basic and acidic residues predominate over residues 143-162 (EGEKGENINESSSTHDESTR).

The protein belongs to the glycosyltransferase 1 family. As to quaternary structure, homodimer or homotetramer. In terms of tissue distribution, expressed in germinating seeds.

It carries out the reaction beta-D-fructose 6-phosphate + UDP-alpha-D-glucose = sucrose 6(F)-phosphate + UDP + H(+). It participates in glycan biosynthesis; sucrose biosynthesis; sucrose from D-fructose 6-phosphate and UDP-alpha-D-glucose: step 1/2. Its activity is regulated as follows. Activity is regulated by phosphorylation and moderated by concentration of metabolites and light. Functionally, plays a role in photosynthetic sucrose synthesis by catalyzing the rate-limiting step of sucrose biosynthesis from UDP-glucose and fructose- 6-phosphate. Involved in the regulation of carbon partitioning in the leaves of plants. May regulate the synthesis of sucrose and therefore play a major role as a limiting factor in the export of photoassimilates out of the leaf. Plays a role for sucrose availability that is essential for plant growth and fiber elongation. The sequence is that of Probable sucrose-phosphate synthase 4 (SPS4) from Oryza sativa subsp. japonica (Rice).